The sequence spans 162 residues: Class I hydrophobin 3 (162 aa).

Cystine bridges form between Cys-36/Cys-150 and Cys-151/Cys-159.

This sequence belongs to the fungal hydrophobin family. Self-assembles to form functional amyloid fibrils called rodlets. Self-assembly into fibrillar rodlets occurs spontaneously at hydrophobic:hydrophilic interfaces and the rodlets further associate laterally to form amphipathic monolayers.

It localises to the secreted. The protein resides in the cell wall. In terms of biological role, aerial growth, conidiation, and dispersal of filamentous fungi in the environment rely upon a capability of their secreting small amphipathic proteins called hydrophobins (HPBs) with low sequence identity. Class I can self-assemble into an outermost layer of rodlet bundles on aerial cell surfaces, conferring cellular hydrophobicity that supports fungal growth, development and dispersal; whereas Class II form highly ordered films at water-air interfaces through intermolecular interactions but contribute nothing to the rodlet structure. This is Class I hydrophobin 3 from Coprinopsis cinerea (strain Okayama-7 / 130 / ATCC MYA-4618 / FGSC 9003) (Inky cap fungus).